Consider the following 345-residue polypeptide: L-threonine 3-dehydrogenase (345 aa).

Cys42 contacts Zn(2+). Active-site charge relay system residues include Thr44 and His47. Residues His67, Glu68, Cys97, Cys100, Cys103, and Cys111 each coordinate Zn(2+). NAD(+) is bound by residues Ile179, Asp199, Arg204, 266 to 268 (LGI), and 290 to 291 (IY).

Belongs to the zinc-containing alcohol dehydrogenase family. In terms of assembly, homotetramer. The cofactor is Zn(2+).

The protein localises to the cytoplasm. The catalysed reaction is L-threonine + NAD(+) = (2S)-2-amino-3-oxobutanoate + NADH + H(+). Its pathway is amino-acid degradation; L-threonine degradation via oxydo-reductase pathway; glycine from L-threonine: step 1/2. Its function is as follows. Catalyzes the NAD(+)-dependent oxidation of L-threonine to 2-amino-3-ketobutyrate. The protein is L-threonine 3-dehydrogenase of Rhizobium rhizogenes (strain K84 / ATCC BAA-868) (Agrobacterium radiobacter).